The sequence spans 238 residues: SPbeta prophage-derived uncharacterized protein YorM (238 aa).

The N-terminal stretch at 1–37 is a signal peptide; the sequence is MFKKLIDKHKKYVYHRINKMALFATIGLLGVGLVYSA. The span at 111–121 shows a compositional bias: basic residues; sequence TKTKKVQKTNT. The disordered stretch occupies residues 111-132; the sequence is TKTKKVQKTNTKRNLDKAVSKS.

The chain is SPbeta prophage-derived uncharacterized protein YorM (yorM) from Bacillus subtilis (strain 168).